A 552-amino-acid chain; its full sequence is Putative transport protein HS_1470 (552 aa).

Transmembrane regions (helical) follow at residues 4-24 (IAITICILALVAVIGLWIGHW), 28-48 (GVGLGIGGVLFGGIIVAHFMN), 67-87 (LILFVYTIGIQVGPGFFASLL), 95-115 (GLATLIVVLGAVSVFVLYKVV), and 157-177 (MAYAMAYPFGICGILLSMWLI). 2 consecutive RCK C-terminal domains span residues 190-275 (KQFQ…VIGE) and 277-360 (IDMP…IIGN). Transmembrane regions (helical) follow at residues 370–390 (MLPVFIGIGLGVLLGSIPFYI), 402–424 (AGGPLVVALILARIGSVGKLYWF), 438–458 (IVLFLAVVGLKSGGGFVDTLV), 463–483 (LEWMGYGMFITFIPLMITGII), 495–515 (LCGLLAGSMTDPPALAFANAI), and 529–549 (VYPLSMFLRIMSPQLLAILLW).

Belongs to the AAE transporter (TC 2.A.81) family. YidE subfamily.

The protein localises to the cell membrane. This chain is Putative transport protein HS_1470, found in Histophilus somni (strain 129Pt) (Haemophilus somnus).